Here is a 245-residue protein sequence, read N- to C-terminus: tRNA1(Val) (adenine(37)-N6)-methyltransferase (245 aa).

It belongs to the methyltransferase superfamily. tRNA (adenine-N(6)-)-methyltransferase family.

The protein resides in the cytoplasm. The catalysed reaction is adenosine(37) in tRNA1(Val) + S-adenosyl-L-methionine = N(6)-methyladenosine(37) in tRNA1(Val) + S-adenosyl-L-homocysteine + H(+). Functionally, specifically methylates the adenine in position 37 of tRNA(1)(Val) (anticodon cmo5UAC). This Klebsiella pneumoniae subsp. pneumoniae (strain ATCC 700721 / MGH 78578) protein is tRNA1(Val) (adenine(37)-N6)-methyltransferase.